The chain runs to 293 residues: Histamine N-methyltransferase (293 aa).

Glu28 contacts substrate. Residues Gly60, Glu89, Gln94, Ser120, and Ile142 each coordinate S-adenosyl-L-methionine. Substrate is bound at residue Asn283.

This sequence belongs to the class I-like SAM-binding methyltransferase superfamily. HNMT family. Monomer.

It is found in the cytoplasm. It catalyses the reaction histamine + S-adenosyl-L-methionine = N(tau)-methylhistamine + S-adenosyl-L-homocysteine + H(+). Its function is as follows. Inactivates histamine by N-methylation. Plays an important role in degrading histamine and in regulating the airway response to histamine. The protein is Histamine N-methyltransferase (hnmt) of Xenopus tropicalis (Western clawed frog).